The sequence spans 64 residues: Disintegrin VB7B (64 aa).

The 64-residue stretch at 1–64 folds into the Disintegrin domain; sequence ELLQNSGNPC…TGISSDCPRN (64 aa). Intrachain disulfides connect Cys-10-Cys-33, Cys-24-Cys-30, Cys-29-Cys-54, and Cys-42-Cys-61. Residues 46-48 carry the Cell attachment site; atypical (KGD) motif; it reads KGD.

Belongs to the venom metalloproteinase (M12B) family. P-II subfamily. P-IIe sub-subfamily. Heterodimer with VB7A; disulfide-linked. As to expression, expressed by the venom gland.

The protein localises to the secreted. Functionally, poor inhibitor of platelet aggregation. The disintegrin inhibits the adhesion of cells expressing the RGD-dependent integrin alpha-5/beta-1 (ITGA5/ITGB1) to immobilized fibronectin. Inhibition on alpha-IIb/beta-3 (ITGA2B/ITGB3) is low. This is Disintegrin VB7B from Vipera berus berus (Common viper).